The sequence spans 486 residues: Protein nucleotidyltransferase YdiU (486 aa).

8 residues coordinate ATP: glycine 90, glycine 92, arginine 93, lysine 113, aspartate 125, glycine 126, arginine 176, and arginine 183. The active-site Proton acceptor is aspartate 252. Positions 253 and 262 each coordinate Mg(2+). Residue aspartate 262 coordinates ATP.

This sequence belongs to the SELO family. Mg(2+) is required as a cofactor. Mn(2+) serves as cofactor.

The catalysed reaction is L-seryl-[protein] + ATP = 3-O-(5'-adenylyl)-L-seryl-[protein] + diphosphate. The enzyme catalyses L-threonyl-[protein] + ATP = 3-O-(5'-adenylyl)-L-threonyl-[protein] + diphosphate. It carries out the reaction L-tyrosyl-[protein] + ATP = O-(5'-adenylyl)-L-tyrosyl-[protein] + diphosphate. It catalyses the reaction L-histidyl-[protein] + UTP = N(tele)-(5'-uridylyl)-L-histidyl-[protein] + diphosphate. The catalysed reaction is L-seryl-[protein] + UTP = O-(5'-uridylyl)-L-seryl-[protein] + diphosphate. The enzyme catalyses L-tyrosyl-[protein] + UTP = O-(5'-uridylyl)-L-tyrosyl-[protein] + diphosphate. Functionally, nucleotidyltransferase involved in the post-translational modification of proteins. It can catalyze the addition of adenosine monophosphate (AMP) or uridine monophosphate (UMP) to a protein, resulting in modifications known as AMPylation and UMPylation. This is Protein nucleotidyltransferase YdiU from Pseudomonas aeruginosa (strain ATCC 15692 / DSM 22644 / CIP 104116 / JCM 14847 / LMG 12228 / 1C / PRS 101 / PAO1).